We begin with the raw amino-acid sequence, 421 residues long: MAAMFRRSCRVLRSLSHFGWRSQHTKAVPQCEPGSGFSFELTEQQKEFQATARKFAREEIIPVAAEYDRTGEYPVPLLKRAWELGLMNTHIPESFGGLGLGIIDSCLITEELAYGCTGVQTAIEANTLGQVPLIIGGNYQQQKKYLGRMTEEPLMCAYCVTEPGAGSDVAGIKTKAEKKGDEYIINGQKMWITNGGKANWYFLLARSDPDPKAPASKAFTGFIVEADTPGVQIGRKEINMGQRCSDTRGIVFEDVRVPKENVLTGEGAGFKIAMGTFDKTRPPVAAGAVGLAQRALDEATKYALERKTFGKLLAEHQGISFLLADMAMKVELARLSYQRAAWEIDSGRRNTYYASIAKAYAADIANQLATDAVQVFGGNGFNTEYPVEKLMRDAKIYQIYEGTAQIQRIIIAREHIGRYKN.

The N-terminal 25 residues, 1 to 25 (MAAMFRRSCRVLRSLSHFGWRSQHT), are a transit peptide targeting the mitochondrion. At Lys79 the chain carries N6-acetyllysine. Residue 158–167 (YCVTEPGAGS) participates in FAD binding. Ser167 contributes to the octanoyl-CoA binding site. Lys179 is modified (N6-succinyllysine). An FAD-binding site is contributed by 191-193 (WIT). Position 212 is an N6-acetyllysine; alternate (Lys212). Lys212 bears the N6-succinyllysine; alternate mark. Ser216 provides a ligand contact to octanoyl-CoA. Residues Lys217, Lys259, and Lys271 each carry the N6-acetyllysine; alternate modification. N6-succinyllysine; alternate occurs at positions 217, 259, and 271. Asp278 contributes to the octanoyl-CoA binding site. Residue Lys279 is modified to N6-acetyllysine. Arg281 contacts octanoyl-CoA. Lys301 carries the post-translational modification N6-acetyllysine. Residues 306-308 (RKT) and 316-317 (HQ) each bind FAD. Octanoyl-CoA-binding residues include Arg349 and Thr351. Phosphothreonine is present on Thr351. Residue 374–378 (QVFGG) participates in FAD binding. An octanoyl-CoA-binding site is contributed by Glu401. The active-site Proton acceptor is the Glu401. 402–405 (GTAQ) contributes to the FAD binding site.

It belongs to the acyl-CoA dehydrogenase family. As to quaternary structure, homotetramer. Interacts with the heterodimeric electron transfer flavoprotein ETF. FAD serves as cofactor. Acetylated. Could occur at proximity of the cofactor-binding sites and reduce the catalytic activity. Could be deacetylated by SIRT3.

The protein localises to the mitochondrion matrix. It carries out the reaction a medium-chain 2,3-saturated fatty acyl-CoA + oxidized [electron-transfer flavoprotein] + H(+) = a medium-chain (2E)-enoyl-CoA + reduced [electron-transfer flavoprotein]. It catalyses the reaction pentanoyl-CoA + oxidized [electron-transfer flavoprotein] + H(+) = (2E)-pentenoyl-CoA + reduced [electron-transfer flavoprotein]. The catalysed reaction is hexanoyl-CoA + oxidized [electron-transfer flavoprotein] + H(+) = (2E)-hexenoyl-CoA + reduced [electron-transfer flavoprotein]. The enzyme catalyses octanoyl-CoA + oxidized [electron-transfer flavoprotein] + H(+) = (2E)-octenoyl-CoA + reduced [electron-transfer flavoprotein]. It carries out the reaction decanoyl-CoA + oxidized [electron-transfer flavoprotein] + H(+) = (2E)-decenoyl-CoA + reduced [electron-transfer flavoprotein]. It catalyses the reaction dodecanoyl-CoA + oxidized [electron-transfer flavoprotein] + H(+) = (2E)-dodecenoyl-CoA + reduced [electron-transfer flavoprotein]. The catalysed reaction is tetradecanoyl-CoA + oxidized [electron-transfer flavoprotein] + H(+) = (2E)-tetradecenoyl-CoA + reduced [electron-transfer flavoprotein]. The enzyme catalyses oxidized [electron-transfer flavoprotein] + hexadecanoyl-CoA + H(+) = (2E)-hexadecenoyl-CoA + reduced [electron-transfer flavoprotein]. It participates in lipid metabolism; mitochondrial fatty acid beta-oxidation. Its function is as follows. Medium-chain specific acyl-CoA dehydrogenase is one of the acyl-CoA dehydrogenases that catalyze the first step of mitochondrial fatty acid beta-oxidation, an aerobic process breaking down fatty acids into acetyl-CoA and allowing the production of energy from fats. The first step of fatty acid beta-oxidation consists in the removal of one hydrogen from C-2 and C-3 of the straight-chain fatty acyl-CoA thioester, resulting in the formation of trans-2-enoyl-CoA. Electron transfer flavoprotein (ETF) is the electron acceptor that transfers electrons to the main mitochondrial respiratory chain via ETF-ubiquinone oxidoreductase (ETF dehydrogenase). Among the different mitochondrial acyl-CoA dehydrogenases, medium-chain specific acyl-CoA dehydrogenase acts specifically on acyl-CoAs with saturated 6 to 12 carbons long primary chains. This is Medium-chain specific acyl-CoA dehydrogenase, mitochondrial from Sus scrofa (Pig).